Consider the following 947-residue polypeptide: Probable outer membrane protein pmp19 (947 aa).

Residues 1–19 form the signal peptide; sequence MKQMRLWGFLFLSSFCQVS. One can recognise an Autotransporter domain in the interval 672–947; the sequence is IPLQHLCVFG…NAHAGLSLSF (276 aa).

It belongs to the PMP outer membrane protein family.

The protein localises to the secreted. Its subcellular location is the cell wall. The protein resides in the cell outer membrane. The sequence is that of Probable outer membrane protein pmp19 (pmp19) from Chlamydia pneumoniae (Chlamydophila pneumoniae).